We begin with the raw amino-acid sequence, 158 residues long: Cyclic pyranopterin monophosphate synthase (158 aa).

Residues 75-77 (LCH) and 113-114 (ME) contribute to the substrate site. Residue Asp128 is part of the active site.

Belongs to the MoaC family. As to quaternary structure, homohexamer; trimer of dimers.

It carries out the reaction (8S)-3',8-cyclo-7,8-dihydroguanosine 5'-triphosphate = cyclic pyranopterin phosphate + diphosphate. It functions in the pathway cofactor biosynthesis; molybdopterin biosynthesis. Catalyzes the conversion of (8S)-3',8-cyclo-7,8-dihydroguanosine 5'-triphosphate to cyclic pyranopterin monophosphate (cPMP). In Roseiflexus sp. (strain RS-1), this protein is Cyclic pyranopterin monophosphate synthase.